We begin with the raw amino-acid sequence, 857 residues long: Thiamine repressible genes regulatory protein thi5 (857 aa).

The zn(2)-C6 fungal-type DNA-binding region spans 38–64 (CLSCRAKKIRCSGSEPCQACIATPSQC). Disordered stretches follow at residues 152–175 (AVKSANVSFPSSSTPPSSDSNFSS) and 797–819 (GHALGNPESNNSSNSFKPSHPSQ). The span at 159–175 (SFPSSSTPPSSDSNFSS) shows a compositional bias: low complexity. Positions 803-819 (PESNNSSNSFKPSHPSQ) are enriched in polar residues.

The protein resides in the nucleus. Transcription factor that activates the nmt1 promoter. Regulation of thiamine repressible genes. Negatively regulates conjugation during meiosis, by inducing negative regulators which delay conjugation. Involved in thi1 regulation. The polypeptide is Thiamine repressible genes regulatory protein thi5 (thi5) (Schizosaccharomyces pombe (strain 972 / ATCC 24843) (Fission yeast)).